We begin with the raw amino-acid sequence, 142 residues long: Hemoglobin subunit alpha-C (142 aa).

A2 is modified (N-acetylalanine). Residues 2–142 (ALNCDDKAHI…VSGLLTSKYR (141 aa)) enclose the Globin domain. H59 contributes to the O2 binding site. H88 is a heme b binding site.

This sequence belongs to the globin family. Heterotetramer of either two alpha-B chains or two alpha-C chains and two beta chains. The two major hemoglobins, B and C, associate upon deoxygenation to form a trimer of tetramers, BC2, that has a much lower affinity for oxygen than either component alone. As to expression, red blood cells.

In terms of biological role, the alpha-C chain is a component of adult hemoglobin C. This is Hemoglobin subunit alpha-C from Aquarana catesbeiana (American bullfrog).